A 220-amino-acid polypeptide reads, in one-letter code: Large ribosomal subunit protein uL3 (220 aa).

Belongs to the universal ribosomal protein uL3 family. As to quaternary structure, part of the 50S ribosomal subunit. Forms a cluster with proteins L14 and L19.

Its function is as follows. One of the primary rRNA binding proteins, it binds directly near the 3'-end of the 23S rRNA, where it nucleates assembly of the 50S subunit. This chain is Large ribosomal subunit protein uL3, found in Staphylococcus haemolyticus (strain JCSC1435).